A 125-amino-acid chain; its full sequence is uncharacterized protein (125 aa).

Helical transmembrane passes span 22 to 44 (TPLM…NAAV) and 54 to 73 (YMGI…SVLM).

It belongs to the bacteriophage holin family. Cp-1 holin subfamily.

The protein resides in the cell membrane. This is an uncharacterized protein from Clostridium acetobutylicum (strain ATCC 824 / DSM 792 / JCM 1419 / IAM 19013 / LMG 5710 / NBRC 13948 / NRRL B-527 / VKM B-1787 / 2291 / W).